The sequence spans 379 residues: Alcohol dehydrogenase 2 (379 aa).

Zn(2+) contacts are provided by cysteine 47, threonine 49, histidine 69, cysteine 99, cysteine 102, cysteine 105, cysteine 113, and cysteine 177. Threonine 49 and histidine 69 together coordinate an alcohol. Threonine 49 is a binding site for NAD(+). NAD(+) is bound by residues 202-207, aspartate 226, lysine 231, threonine 272, valine 295, 295-297, phenylalanine 322, and arginine 372; these read GLGAVG and VGV.

The protein belongs to the zinc-containing alcohol dehydrogenase family. Homodimer. Requires Zn(2+) as cofactor.

Its subcellular location is the cytoplasm. The enzyme catalyses a primary alcohol + NAD(+) = an aldehyde + NADH + H(+). It catalyses the reaction a secondary alcohol + NAD(+) = a ketone + NADH + H(+). The protein is Alcohol dehydrogenase 2 (ADH2) of Oryza sativa subsp. indica (Rice).